The sequence spans 610 residues: MTATASHTRARPLGASEIEHATRIAEPDFDLLDALYRTDDPDDQARLLARVVLSAFDNYYAVSRRIPALAQAAFEARDWPVTVRLSKIRIGLYTACIDQLVPLLKAGLPELTTDEQLWPTAEAELLAAIEGRYEADFAFAFWQSLRRKLVSDEWRPVSYDAGSTARRTTSPAAVLKTTTTTLPITAEVIAGILGDAGFRVPWRDRDGDAALAAQAIETALEPLSPRPGEPVKIEIADAGFFRNRGACLVGRIQLRDRGDMPMRNLPLLIALLNEKDGLVVDAVLTDSDELQYAFSSTLANYHATNPRYHELARLLYELMPKRPLGTQYSCIGFHHLGKVAVMSEILAEHRKTKERLATAPGFKGTVAIAFTMPSSAYVLKIIRDHPTDDYKFDYFDGLDEVLRKYNLVHEIDRAGSMLDNIIYSNVKLDRAMFAPELLDELLEAGIGTVTLDRGALVFRHLIVQIKLTPLPLYLANASAAESRAAVINLGDCIKNNAAADIFNKDLDGRNYGVSRIRKVYLFDYDAVEPLTSVTVSRDGAAPGEFDNGMVFRPQEMLEGLRIDDPGLRRAFRDAHPELMQADYWEGMQRALRDGKVPKVMNYPASRRLQR.

ATP contacts are provided by residues 359–365 (APGFKGT) and Lys380. The active site involves Asp419.

Belongs to the AceK family.

Its subcellular location is the cytoplasm. It carries out the reaction L-seryl-[isocitrate dehydrogenase] + ATP = O-phospho-L-seryl-[isocitrate dehydrogenase] + ADP + H(+). Bifunctional enzyme which can phosphorylate or dephosphorylate isocitrate dehydrogenase (IDH) on a specific serine residue. This is a regulatory mechanism which enables bacteria to bypass the Krebs cycle via the glyoxylate shunt in response to the source of carbon. When bacteria are grown on glucose, IDH is fully active and unphosphorylated, but when grown on acetate or ethanol, the activity of IDH declines drastically concomitant with its phosphorylation. The protein is Isocitrate dehydrogenase kinase/phosphatase of Rhodopseudomonas palustris (strain TIE-1).